The following is a 336-amino-acid chain: Anthranilate phosphoribosyltransferase (336 aa).

5-phospho-alpha-D-ribose 1-diphosphate-binding positions include glycine 82, 85 to 86 (GD), threonine 90, 92 to 95 (NVST), 110 to 118 (KHGNRSVSS), and serine 122. Anthranilate is bound at residue glycine 82. Serine 94 contributes to the Mg(2+) binding site. Asparagine 113 serves as a coordination point for anthranilate. Residue arginine 168 coordinates anthranilate. Residues aspartate 227 and glutamate 228 each contribute to the Mg(2+) site.

The protein belongs to the anthranilate phosphoribosyltransferase family. As to quaternary structure, homodimer. The cofactor is Mg(2+).

The enzyme catalyses N-(5-phospho-beta-D-ribosyl)anthranilate + diphosphate = 5-phospho-alpha-D-ribose 1-diphosphate + anthranilate. It participates in amino-acid biosynthesis; L-tryptophan biosynthesis; L-tryptophan from chorismate: step 2/5. Catalyzes the transfer of the phosphoribosyl group of 5-phosphorylribose-1-pyrophosphate (PRPP) to anthranilate to yield N-(5'-phosphoribosyl)-anthranilate (PRA). The protein is Anthranilate phosphoribosyltransferase of Leptospira borgpetersenii serovar Hardjo-bovis (strain JB197).